The following is a 310-amino-acid chain: 4-hydroxy-3-methylbut-2-enyl diphosphate reductase (310 aa).

Cys12 serves as a coordination point for [4Fe-4S] cluster. (2E)-4-hydroxy-3-methylbut-2-enyl diphosphate is bound by residues His41 and His74. The dimethylallyl diphosphate site is built by His41 and His74. Positions 41 and 74 each coordinate isopentenyl diphosphate. Residue Cys96 coordinates [4Fe-4S] cluster. (2E)-4-hydroxy-3-methylbut-2-enyl diphosphate is bound at residue His124. Residue His124 participates in dimethylallyl diphosphate binding. Isopentenyl diphosphate is bound at residue His124. Glu126 acts as the Proton donor in catalysis. Thr167 lines the (2E)-4-hydroxy-3-methylbut-2-enyl diphosphate pocket. Cys197 is a [4Fe-4S] cluster binding site. 4 residues coordinate (2E)-4-hydroxy-3-methylbut-2-enyl diphosphate: Ser225, Ser226, Asn227, and Ser269. Positions 225, 226, 227, and 269 each coordinate dimethylallyl diphosphate. Residues Ser225, Ser226, Asn227, and Ser269 each coordinate isopentenyl diphosphate.

The protein belongs to the IspH family. It depends on [4Fe-4S] cluster as a cofactor.

The enzyme catalyses isopentenyl diphosphate + 2 oxidized [2Fe-2S]-[ferredoxin] + H2O = (2E)-4-hydroxy-3-methylbut-2-enyl diphosphate + 2 reduced [2Fe-2S]-[ferredoxin] + 2 H(+). It catalyses the reaction dimethylallyl diphosphate + 2 oxidized [2Fe-2S]-[ferredoxin] + H2O = (2E)-4-hydroxy-3-methylbut-2-enyl diphosphate + 2 reduced [2Fe-2S]-[ferredoxin] + 2 H(+). It participates in isoprenoid biosynthesis; dimethylallyl diphosphate biosynthesis; dimethylallyl diphosphate from (2E)-4-hydroxy-3-methylbutenyl diphosphate: step 1/1. The protein operates within isoprenoid biosynthesis; isopentenyl diphosphate biosynthesis via DXP pathway; isopentenyl diphosphate from 1-deoxy-D-xylulose 5-phosphate: step 6/6. Its function is as follows. Catalyzes the conversion of 1-hydroxy-2-methyl-2-(E)-butenyl 4-diphosphate (HMBPP) into a mixture of isopentenyl diphosphate (IPP) and dimethylallyl diphosphate (DMAPP). Acts in the terminal step of the DOXP/MEP pathway for isoprenoid precursor biosynthesis. The sequence is that of 4-hydroxy-3-methylbut-2-enyl diphosphate reductase from Tolumonas auensis (strain DSM 9187 / NBRC 110442 / TA 4).